The following is a 451-amino-acid chain: D-inositol 3-phosphate glycosyltransferase (451 aa).

Histidine 21 provides a ligand contact to 1D-myo-inositol 3-phosphate. UDP-N-acetyl-alpha-D-glucosamine-binding positions include 27-28 and glycine 35; that span reads QP. 1D-myo-inositol 3-phosphate-binding positions include 32 to 37, lysine 90, tyrosine 123, threonine 147, and arginine 167; that span reads DAGGMN. The UDP-N-acetyl-alpha-D-glucosamine site is built by arginine 241, lysine 246, and glutamine 305. Mg(2+) is bound by residues tyrosine 314, arginine 315, and alanine 317. Residues glutamate 327 and glutamate 335 each coordinate UDP-N-acetyl-alpha-D-glucosamine. Threonine 341 serves as a coordination point for Mg(2+).

The protein belongs to the glycosyltransferase group 1 family. MshA subfamily. As to quaternary structure, homodimer.

The catalysed reaction is 1D-myo-inositol 3-phosphate + UDP-N-acetyl-alpha-D-glucosamine = 1D-myo-inositol 2-acetamido-2-deoxy-alpha-D-glucopyranoside 3-phosphate + UDP + H(+). Functionally, catalyzes the transfer of a N-acetyl-glucosamine moiety to 1D-myo-inositol 3-phosphate to produce 1D-myo-inositol 2-acetamido-2-deoxy-glucopyranoside 3-phosphate in the mycothiol biosynthesis pathway. This Nocardia farcinica (strain IFM 10152) protein is D-inositol 3-phosphate glycosyltransferase.